The following is a 158-amino-acid chain: Non-secretory ribonuclease (158 aa).

An N-terminal signal peptide occupies residues 1–27; it reads MVPKLFTSQICLLPLLGLLSAEGSPHA. Histidine 42 (proton acceptor) is an active-site residue. 3'-nitrotyrosine is present on tyrosine 60. 65-69 is a substrate binding site; sequence KNKNT. N-linked (GlcNAc...) asparagine glycosylation is found at asparagine 86, asparagine 92, and asparagine 111. The active-site Proton donor is histidine 153.

Belongs to the pancreatic ribonuclease family. In terms of assembly, interacts with and forms a tight 1:1 complex with RNH1. Dimerization of two such complexes may occur.

The protein resides in the lysosome. The protein localises to the cytoplasmic granule. It catalyses the reaction an [RNA] containing cytidine + H2O = an [RNA]-3'-cytidine-3'-phosphate + a 5'-hydroxy-ribonucleotide-3'-[RNA].. The enzyme catalyses an [RNA] containing uridine + H2O = an [RNA]-3'-uridine-3'-phosphate + a 5'-hydroxy-ribonucleotide-3'-[RNA].. Functionally, this is a non-secretory ribonuclease. It is a pyrimidine specific nuclease with a slight preference for U. Cytotoxin and helminthotoxin. Possesses a wide variety of biological activities. In Callithrix jacchus (White-tufted-ear marmoset), this protein is Non-secretory ribonuclease (RNASE2).